Reading from the N-terminus, the 741-residue chain is MATKFPKFSQDLAQDPTTRRIWYAIAMAHDFESHDGMTEENLYQKIFASHFGHLAIIFLWVSGSLFHVAWQGNFEQWVQDPVNTRPIAHAIWDPQFGKAAVDAFTQAGASNPVDIAYSGVYHWWYTIGMRTNGDLYQGAIFLLILASLALFAGWLHLQPKFRPSLSWFKNAESRLNHHLAGLFGVSSLAWAGHLIHVAIPESRGQHVGWDNFLSTMPHPAGLAPFFTGNWGVYAQNPDTASHVFGTAQGAGTAILTFLGGFHPQTESLWLTDMAHHHLAIAVLFIVAGHMYRTQFGIGHSIKEMMDAKDFFGTKVEGPFNMPHQGIYETYNNSLHFQLGWHLACLGVITSLVAQHMYSLPPYAFIAQDHTTMAALYTHHQYIAGFLMVGAFAHGAIFLVRDYDPAQNKGNVLDRVLQHKEAIISHLSWVSLFLGFHTLGLYVHNDVVVAFGTPEKQILIEPVFAQFIQAAHGKLLYGFDTLLSNPDSIASTAWPNYGNVWLPGWLDAINSGTNSLFLTIGPGDFLVHHAIALGLHTTTLILVKGALDARGSKLMPDKKDFGYAFPCDGPGRGGTCDISAWDAFYLAMFWMLNTIGWVTFYWHWKHLGVWEGNVAQFNESSTYLMGWLRDYLWLNSSQLINGYNPFGTNNLSVWAWMFLFGHLVWATGFMFLISWRGYWQELIETLVWAHERTPLANLVRWKDKPVALSIVQARLVGLAHFSVGYILTYAAFLIASTAAKFG.

Over 2 to 38 (ATKFPKFSQDLAQDPTTRRIWYAIAMAHDFESHDGMT) the chain is Cytoplasmic. A helical transmembrane segment spans residues 39 to 70 (EENLYQKIFASHFGHLAIIFLWVSGSLFHVAW). Topologically, residues 71 to 131 (QGNFEQWVQD…HWWYTIGMRT (61 aa)) are lumenal, thylakoid. Residues 132 to 156 (NGDLYQGAIFLLILASLALFAGWLH) form a helical membrane-spanning segment. At 157–172 (LQPKFRPSLSWFKNAE) the chain is on the cytoplasmic side. The chain crosses the membrane as a helical span at residues 173–195 (SRLNHHLAGLFGVSSLAWAGHLI). At 196–269 (HVAIPESRGQ…GFHPQTESLW (74 aa)) the chain is on the lumenal, thylakoid side. A helical membrane pass occupies residues 270–287 (LTDMAHHHLAIAVLFIVA). Residues 288–334 (GHMYRTQFGIGHSIKEMMDAKDFFGTKVEGPFNMPHQGIYETYNNSL) lie on the Cytoplasmic side of the membrane. The helical transmembrane segment at 335 to 358 (HFQLGWHLACLGVITSLVAQHMYS) threads the bilayer. Over 359-368 (LPPYAFIAQD) the chain is Lumenal, thylakoid. Residues 369 to 400 (HTTMAALYTHHQYIAGFLMVGAFAHGAIFLVR) form a helical membrane-spanning segment. Over 401 to 419 (DYDPAQNKGNVLDRVLQHK) the chain is Cytoplasmic. A helical transmembrane segment spans residues 420 to 449 (EAIISHLSWVSLFLGFHTLGLYVHNDVVVA). The Lumenal, thylakoid segment spans residues 450 to 520 (FGTPEKQILI…GTNSLFLTIG (71 aa)). Residues 521–545 (PGDFLVHHAIALGLHTTTLILVKGA) form a helical membrane-spanning segment. The Cytoplasmic segment spans residues 546–578 (LDARGSKLMPDKKDFGYAFPCDGPGRGGTCDIS). [4Fe-4S] cluster contacts are provided by C566 and C575. A helical transmembrane segment spans residues 579–610 (AWDAFYLAMFWMLNTIGWVTFYWHWKHLGVWE). Residues 611–650 (GNVAQFNESSTYLMGWLRDYLWLNSSQLINGYNPFGTNNL) lie on the Lumenal, thylakoid side of the membrane. Residues 651 to 672 (SVWAWMFLFGHLVWATGFMFLI) traverse the membrane as a helical segment. 3 residues coordinate chlorophyll a: H661, M669, and Y677. The Cytoplasmic segment spans residues 673–708 (SWRGYWQELIETLVWAHERTPLANLVRWKDKPVALS). W678 contributes to the phylloquinone binding site. Residues 709–737 (IVQARLVGLAHFSVGYILTYAAFLIASTA) traverse the membrane as a helical segment. Topologically, residues 738–741 (AKFG) are lumenal, thylakoid.

The protein belongs to the PsaA/PsaB family. As to quaternary structure, the PsaA/B heterodimer binds the P700 chlorophyll special pair and subsequent electron acceptors. PSI consists of a core antenna complex that captures photons, and an electron transfer chain that converts photonic excitation into a charge separation. The cyanobacterial PSI reaction center is composed of one copy each of PsaA,B,C,D,E,F,I,J,K,L,M and X, and forms trimeric complexes. The cofactor is PSI electron transfer chain: 5 chlorophyll a, 1 chlorophyll a', 2 phylloquinones and 3 4Fe-4S clusters. PSI core antenna: 90 chlorophyll a, 22 carotenoids, 3 phospholipids and 1 galactolipid. P700 is a chlorophyll a/chlorophyll a' dimer, A0 is one or more chlorophyll a, A1 is one or both phylloquinones and FX is a shared 4Fe-4S iron-sulfur center..

It localises to the cellular thylakoid membrane. The enzyme catalyses reduced [plastocyanin] + hnu + oxidized [2Fe-2S]-[ferredoxin] = oxidized [plastocyanin] + reduced [2Fe-2S]-[ferredoxin]. In terms of biological role, psaA and PsaB bind P700, the primary electron donor of photosystem I (PSI), as well as the electron acceptors A0, A1 and FX. PSI is a plastocyanin/cytochrome c6-ferredoxin oxidoreductase, converting photonic excitation into a charge separation, which transfers an electron from the donor P700 chlorophyll pair to the spectroscopically characterized acceptors A0, A1, FX, FA and FB in turn. Oxidized P700 is reduced on the lumenal side of the thylakoid membrane by plastocyanin or cytochrome c6. The sequence is that of Photosystem I P700 chlorophyll a apoprotein A2 (psaB) from Thermosynechococcus vestitus (strain NIES-2133 / IAM M-273 / BP-1).